A 150-amino-acid polypeptide reads, in one-letter code: Holo-[acyl-carrier-protein] synthase (150 aa).

The Mg(2+) site is built by Asp-8 and Glu-57.

The protein belongs to the P-Pant transferase superfamily. AcpS family. The cofactor is Mg(2+).

The protein localises to the cytoplasm. The enzyme catalyses apo-[ACP] + CoA = holo-[ACP] + adenosine 3',5'-bisphosphate + H(+). Transfers the 4'-phosphopantetheine moiety from coenzyme A to a Ser of acyl-carrier-protein. The sequence is that of Holo-[acyl-carrier-protein] synthase from Jannaschia sp. (strain CCS1).